The chain runs to 258 residues: Meiotic drive suppressor wtf20 (258 aa).

The segment at 1–71 (MKNNYTSLKS…GPTEIANPNV (71 aa)) is disordered. The segment covering 19–30 (KTDHEIDLEKGL) has biased composition (basic and acidic residues). 3 consecutive transmembrane segments (helical) span residues 84–106 (IYFL…TAWV), 121–140 (FSVT…FYFY), and 196–216 (SASA…AETV).

This sequence belongs to the WTF family. Homomer. Interacts with other proteins that exhibit high sequence similarity.

Its subcellular location is the spore membrane. The protein resides in the vacuole membrane. Its function is as follows. Acts as a suppressor component of the dual wtf meiotic drive system, and can suppress but not confer meiotic drive by compatible poisons. Wtf meiotic drive systems promote unequal transmission of alleles from the parental zygote to progeny spores by encoding a poison and an antidote from the same locus; the poison is trans-acting and forms toxic aggregates in all spores within an ascus, wherease the antidote is spore-specific and targets aggregates for degradation by the vacuole. Meiotic drive by wtf systems therefore lead to poisoning of all progeny that do not inherit the dual poison/antidote allele, or express a compatible antidote. This Schizosaccharomyces pombe (strain 972 / ATCC 24843) (Fission yeast) protein is Meiotic drive suppressor wtf20.